The following is an 889-amino-acid chain: Alanine--tRNA ligase (889 aa).

4 residues coordinate Zn(2+): histidine 564, histidine 568, cysteine 671, and histidine 675.

This sequence belongs to the class-II aminoacyl-tRNA synthetase family. Zn(2+) is required as a cofactor.

Its subcellular location is the cytoplasm. It catalyses the reaction tRNA(Ala) + L-alanine + ATP = L-alanyl-tRNA(Ala) + AMP + diphosphate. Functionally, catalyzes the attachment of alanine to tRNA(Ala) in a two-step reaction: alanine is first activated by ATP to form Ala-AMP and then transferred to the acceptor end of tRNA(Ala). Also edits incorrectly charged Ser-tRNA(Ala) and Gly-tRNA(Ala) via its editing domain. This chain is Alanine--tRNA ligase, found in Pelagibacter ubique (strain HTCC1062).